A 586-amino-acid chain; its full sequence is Pescadillo homolog (586 aa).

The segment at 1–54 (MGGLEKKKYERGSATNYITRNKARKKLQLSLPDFRRLCILKGIYPHEPKHKKKV) is required for 28S ribosomal RNA processing. Residues 1-257 (MGGLEKKKYE…PKIESQAQAE (257 aa)) form a sufficient for nucleolar localization region. An N6-acetyllysine modification is found at K98. The interval 305–414 (VTAQEEDRRK…LLLPVAEYFP (110 aa)) is sufficient for interaction with MAP1B. The BRCT domain maps to 321–414 (KHKKLFEGLK…LLLPVAEYFP (94 aa)). Residues 447-508 (GEDPGNLEEE…QQRLGGKKPQ (62 aa)) are disordered. Over residues 451 to 491 (GNLEEEEEDEDDEGDDSEGDGDVAVENEEEVVEAESEEEEE) the composition is skewed to acidic residues. K515 is covalently cross-linked (Glycyl lysine isopeptide (Lys-Gly) (interchain with G-Cter in SUMO1); alternate). Residue K515 forms a Glycyl lysine isopeptide (Lys-Gly) (interchain with G-Cter in SUMO2); alternate linkage. Residues 537 to 586 (MMKKREKYLYQKIMFGKRRKIREANKLAEKRKAHDDAVRSEKKAKRTRPV) are required for 28S ribosomal RNA processing. Positions 562–577 (KLAEKRKAHDDAVRSE) are enriched in basic and acidic residues. The interval 562-586 (KLAEKRKAHDDAVRSEKKAKRTRPV) is disordered.

The protein belongs to the pescadillo family. As to quaternary structure, component of the PeBoW complex, composed of BOP1, PES1 and WDR12. The complex is held together by BOP1, which interacts with PES1 via its N-terminal domain and with WDR12 via a high-affinity interaction between the seven-bladed beta-propeller domains of the 2 proteins. The PeBoW complex associates with the 66S pre-ribosome. The PeBoW complex also associates with DDX27, PES1 interacts directly with DDX27. Interacts with IRS1 and UBTF. May interact with MAP1B. In terms of processing, sumoylated.

It is found in the nucleus. The protein resides in the nucleolus. It localises to the nucleoplasm. The protein localises to the chromosome. Functionally, component of the PeBoW complex, which is required for maturation of 28S and 5.8S ribosomal RNAs and formation of the 60S ribosome. The protein is Pescadillo homolog (Pes1) of Rattus norvegicus (Rat).